We begin with the raw amino-acid sequence, 617 residues long: Dihydroxy-acid dehydratase (617 aa).

Aspartate 81 lines the Mg(2+) pocket. Position 122 (cysteine 122) interacts with [2Fe-2S] cluster. The Mg(2+) site is built by aspartate 123 and lysine 124. Lysine 124 bears the N6-carboxylysine mark. Residue cysteine 195 participates in [2Fe-2S] cluster binding. Glutamate 492 provides a ligand contact to Mg(2+). Catalysis depends on serine 518, which acts as the Proton acceptor.

It belongs to the IlvD/Edd family. Homodimer. It depends on [2Fe-2S] cluster as a cofactor. The cofactor is Mg(2+).

The enzyme catalyses (2R)-2,3-dihydroxy-3-methylbutanoate = 3-methyl-2-oxobutanoate + H2O. It catalyses the reaction (2R,3R)-2,3-dihydroxy-3-methylpentanoate = (S)-3-methyl-2-oxopentanoate + H2O. The protein operates within amino-acid biosynthesis; L-isoleucine biosynthesis; L-isoleucine from 2-oxobutanoate: step 3/4. Its pathway is amino-acid biosynthesis; L-valine biosynthesis; L-valine from pyruvate: step 3/4. Functions in the biosynthesis of branched-chain amino acids. Catalyzes the dehydration of (2R,3R)-2,3-dihydroxy-3-methylpentanoate (2,3-dihydroxy-3-methylvalerate) into 2-oxo-3-methylpentanoate (2-oxo-3-methylvalerate) and of (2R)-2,3-dihydroxy-3-methylbutanoate (2,3-dihydroxyisovalerate) into 2-oxo-3-methylbutanoate (2-oxoisovalerate), the penultimate precursor to L-isoleucine and L-valine, respectively. This is Dihydroxy-acid dehydratase from Xanthobacter autotrophicus (strain ATCC BAA-1158 / Py2).